The following is a 414-amino-acid chain: Phosphoglycerate kinase (414 aa).

Substrate contacts are provided by residues 19-21 (DLN), Arg-34, 57-60 (HQSK), Arg-114, and Arg-154. ATP is bound by residues Glu-332 and 358–361 (GGHS).

It belongs to the phosphoglycerate kinase family. Monomer.

Its subcellular location is the cytoplasm. The enzyme catalyses (2R)-3-phosphoglycerate + ATP = (2R)-3-phospho-glyceroyl phosphate + ADP. The protein operates within carbohydrate degradation; glycolysis; pyruvate from D-glyceraldehyde 3-phosphate: step 2/5. This chain is Phosphoglycerate kinase, found in Thermococcus onnurineus (strain NA1).